Reading from the N-terminus, the 885-residue chain is Cytosolic carboxypeptidase-like protein 5 (885 aa).

The Peptidase M14 domain occupies 150–576 (YPFSYAECQD…AVAVAALDMA (427 aa)). The Zn(2+) site is built by H247 and E250. 2 disordered regions span residues 341–364 (SGSALKTSNQSNTSPPVATPTERE) and 392–428 (ESWEKSGVQREAEHSDENESAQSRGETNSAPSEQVPP). The segment covering 344 to 356 (ALKTSNQSNTSPP) has biased composition (polar residues). Basic and acidic residues predominate over residues 393 to 408 (SWEKSGVQREAEHSDE). Residues 411–428 (SAQSRGETNSAPSEQVPP) are compositionally biased toward polar residues. A Zn(2+)-binding site is contributed by H440. E522 acts as the Proton donor/acceptor in catalysis. Residues 606–668 (STGLTSNNRR…KSSPSFTFGT (63 aa)) are compositionally biased toward polar residues. 2 disordered regions span residues 606–788 (STGL…RTAL) and 866–885 (ALLKNSSRQTDQHIHRSLPT). The segment covering 682–691 (RECKAQEKRR) has biased composition (basic and acidic residues). Residues 712 to 749 (LSAPVRAPLSPSSSSSSSSSSPSSSSSAPGPGSISLAG) are compositionally biased toward low complexity.

Belongs to the peptidase M14 family. It depends on Zn(2+) as a cofactor.

The protein resides in the cytoplasm. The protein localises to the cytosol. It localises to the nucleus. Its subcellular location is the cytoskeleton. It is found in the spindle. The protein resides in the midbody. It catalyses the reaction gamma-L-glutamyl-L-glutamyl-[protein] + H2O = L-glutamyl-[protein] + L-glutamate. The catalysed reaction is (L-glutamyl)(n+1)-gamma-L-glutamyl-L-glutamyl-[protein] + H2O = (L-glutamyl)(n)-gamma-L-glutamyl-L-glutamyl-[protein] + L-glutamate. It carries out the reaction C-terminal L-alpha-aminoacyl-L-glutamyl-[tubulin] + H2O = C-terminal L-alpha-aminoacyl-[tubulin] + L-glutamate. The enzyme catalyses C-terminal L-alpha-aminoacyl-L-glutamyl-L-glutamyl-[tubulin] + H2O = C-terminal L-alpha-aminoacyl-L-glutamyl-[tubulin] + L-glutamate. Metallocarboxypeptidase that mediates deglutamylation of tubulin and non-tubulin target proteins. Catalyzes the removal of polyglutamate side chains present on the gamma-carboxyl group of glutamate residues within the C-terminal tail of alpha- and beta-tubulin. Cleaves alpha- and gamma-linked polyglutamate tubulin side-chain, as well as the branching point glutamate. Also catalyzes the removal of alpha-linked glutamate residues from the carboxy-terminus of alpha-tubulin. This Danio rerio (Zebrafish) protein is Cytosolic carboxypeptidase-like protein 5 (agbl5).